The chain runs to 177 residues: Mitochondrial inner membrane protease subunit 2 (177 aa).

The chain crosses the membrane as a helical span at residues 19-37 (FFVAVPVAVTFLDRVACVA). Catalysis depends on residues Ser43 and Lys91.

It belongs to the peptidase S26 family. IMP2 subfamily. In terms of assembly, heterodimer of 2 subunits, IMMPL1 and IMMPL2.

It is found in the mitochondrion inner membrane. In terms of biological role, catalyzes the removal of transit peptides required for the targeting of proteins from the mitochondrial matrix, across the inner membrane, into the inter-membrane space. Known to process the nuclear encoded protein DIABLO. The sequence is that of Mitochondrial inner membrane protease subunit 2 (IMMP2L) from Bos taurus (Bovine).